The sequence spans 334 residues: Anthranilate phosphoribosyltransferase (334 aa).

5-phospho-alpha-D-ribose 1-diphosphate is bound by residues Gly-81, Gly-84–Asp-85, Thr-89, Asn-91–Thr-94, Lys-109–Ser-117, and Ala-121. Residue Gly-81 coordinates anthranilate. Ser-93 provides a ligand contact to Mg(2+). Residue Arg-167 participates in anthranilate binding. Asp-225 and Glu-226 together coordinate Mg(2+).

This sequence belongs to the anthranilate phosphoribosyltransferase family. Homodimer. Mg(2+) is required as a cofactor.

It catalyses the reaction N-(5-phospho-beta-D-ribosyl)anthranilate + diphosphate = 5-phospho-alpha-D-ribose 1-diphosphate + anthranilate. It functions in the pathway amino-acid biosynthesis; L-tryptophan biosynthesis; L-tryptophan from chorismate: step 2/5. Catalyzes the transfer of the phosphoribosyl group of 5-phosphorylribose-1-pyrophosphate (PRPP) to anthranilate to yield N-(5'-phosphoribosyl)-anthranilate (PRA). The protein is Anthranilate phosphoribosyltransferase of Actinobacillus pleuropneumoniae serotype 7 (strain AP76).